A 473-amino-acid polypeptide reads, in one-letter code: Ribulose bisphosphate carboxylase large chain 2 (473 aa).

Positions 116 and 166 each coordinate substrate. Lys-168 acts as the Proton acceptor in catalysis. A substrate-binding site is contributed by Lys-170. Residues Lys-194, Asp-196, and Glu-197 each coordinate Mg(2+). Position 194 is an N6-carboxylysine (Lys-194). His-287 serves as the catalytic Proton acceptor. Arg-288, His-320, and Ser-372 together coordinate substrate.

Belongs to the RuBisCO large chain family. Type I subfamily. In terms of assembly, heterohexadecamer of 8 large chains and 8 small chains. Mg(2+) serves as cofactor.

It carries out the reaction 2 (2R)-3-phosphoglycerate + 2 H(+) = D-ribulose 1,5-bisphosphate + CO2 + H2O. The enzyme catalyses D-ribulose 1,5-bisphosphate + O2 = 2-phosphoglycolate + (2R)-3-phosphoglycerate + 2 H(+). RuBisCO catalyzes two reactions: the carboxylation of D-ribulose 1,5-bisphosphate, the primary event in carbon dioxide fixation, as well as the oxidative fragmentation of the pentose substrate. Both reactions occur simultaneously and in competition at the same active site. This chain is Ribulose bisphosphate carboxylase large chain 2, found in Cereibacter sphaeroides (strain ATCC 17025 / ATH 2.4.3) (Rhodobacter sphaeroides).